The following is a 333-amino-acid chain: Protoheme IX farnesyltransferase (333 aa).

7 helical membrane-spanning segments follow: residues 64–84 (LICT…LNCL), 110–130 (TVFL…VSGV), 133–153 (LAAG…TVIL), 161–181 (IVFG…AATG), 189–209 (WLFG…AILL), 246–266 (IMGV…LLPF), and 287–307 (AKSL…LLLI).

This sequence belongs to the UbiA prenyltransferase family. Protoheme IX farnesyltransferase subfamily.

It localises to the cell inner membrane. It catalyses the reaction heme b + (2E,6E)-farnesyl diphosphate + H2O = Fe(II)-heme o + diphosphate. It participates in porphyrin-containing compound metabolism; heme O biosynthesis; heme O from protoheme: step 1/1. In terms of biological role, converts heme B (protoheme IX) to heme O by substitution of the vinyl group on carbon 2 of heme B porphyrin ring with a hydroxyethyl farnesyl side group. This Prochlorococcus marinus (strain AS9601) protein is Protoheme IX farnesyltransferase.